The chain runs to 317 residues: Anamorsin homolog 2 (317 aa).

Residues 1–162 (MAKKVGVLLF…KPSWDSASVF (162 aa)) are N-terminal SAM-like domain. The interval 163 to 229 (QLRKGSSQKG…EDDLLTEEDL (67 aa)) is linker. [2Fe-2S] cluster contacts are provided by Cys-240, Cys-247, Cys-250, and Cys-252. The segment at 240–252 (CAPTKKACKNCTC) is fe-S binding site A. [4Fe-4S] cluster-binding residues include Cys-278, Cys-281, Cys-289, and Cys-292. 2 short sequence motifs (cx2C motif) span residues 278–281 (CGSC) and 289–292 (CAGC). Residues 278-292 (CGSCGLGDAFRCAGC) are fe-S binding site B.

Belongs to the anamorsin family. Monomer. The cofactor is [2Fe-2S] cluster. Requires [4Fe-4S] cluster as cofactor.

The protein localises to the cytoplasm. It localises to the mitochondrion intermembrane space. Its function is as follows. Component of the cytosolic iron-sulfur (Fe-S) protein assembly (CIA) machinery. Required for the maturation of extramitochondrial Fe-S proteins. Part of an electron transfer chain functioning in an early step of cytosolic Fe-S biogenesis, facilitating the de novo assembly of a [4Fe-4S] cluster on the cytosolic Fe-S scaffold complex. Electrons are transferred from NADPH via a FAD- and FMN-containing diflavin oxidoreductase. Together with the diflavin oxidoreductase, also required for the assembly of the diferric tyrosyl radical cofactor of ribonucleotide reductase (RNR), probably by providing electrons for reduction during radical cofactor maturation in the catalytic small subunit. This is Anamorsin homolog 2 from Physcomitrium patens (Spreading-leaved earth moss).